Consider the following 278-residue polypeptide: Adenylate kinase (278 aa).

50–55 (GAGKGT) serves as a coordination point for ATP. Positions 70 to 99 (ATGDMLRAQVAKGTALGKQAKKIMNEGGLV) are NMP. Residues Thr71, Arg76, 97–99 (GLV), 126–129 (GFPR), and Gln133 each bind AMP. Residues 167 to 204 (GRLVHPASGRSYHRIFNPPKDDMKDDITGEPLVQRSDD) are LID. Residues Arg168 and 177–178 (SY) each bind ATP. Arg201 and Arg212 together coordinate AMP. Gln240 contacts ATP.

It belongs to the adenylate kinase family. AK2 subfamily. Monomer.

It localises to the cytoplasm. The protein localises to the cytosol. It is found in the mitochondrion intermembrane space. The enzyme catalyses AMP + ATP = 2 ADP. In terms of biological role, catalyzes the reversible transfer of the terminal phosphate group between ATP and AMP. Plays an important role in cellular energy homeostasis and in adenine nucleotide metabolism. Adenylate kinase activity is critical for regulation of the phosphate utilization and the AMP de novo biosynthesis pathways. The chain is Adenylate kinase (adk-1) from Neurospora crassa (strain ATCC 24698 / 74-OR23-1A / CBS 708.71 / DSM 1257 / FGSC 987).